Here is a 207-residue protein sequence, read N- to C-terminus: Cytidylyl-2-hydroxypropylphosphonate hydrolase (207 aa).

The CDP site is built by tryptophan 68, arginine 74, glutamine 76, and serine 77. Asparagine 109, aspartate 125, glutamate 127, and aspartate 129 together coordinate a divalent metal cation. CDP is bound at residue lysine 142. Lysine 142 (proton donor) is an active-site residue. Aspartate 143 contributes to the a divalent metal cation binding site.

This sequence belongs to the FomD family. It depends on Mn(2+) as a cofactor. The cofactor is Co(2+).

The enzyme catalyses cytidine 5'-({hydroxy[(S)-2-hydroxypropyl]phosphonoyl}phosphate) + H2O = (S)-2-hydroxypropylphosphonate + CMP + H(+). The protein operates within antibiotic biosynthesis; fosfomycin biosynthesis. Its activity is regulated as follows. Hydrolysis of (S)-HPP-CMP is inhibited by CDP. In terms of biological role, involved in fosfomycin biosynthesis. Catalyzes the hydrolysis of cytidylyl (S)-2-hydroxypropylphosphonate ((S)-HPP-CMP) to give (S)-2-hydroxypropylphosphonate ((S)-HPP) and CMP. Can also hydrolyze (R)-HPP-CMP and cytidylyl 2-hydroxyethylphosphonate (HEP-CMP), which is a biosynthetic intermediate before C-methylation, but the catalytic efficiency is much higher with (S)-HPP-CMP. The protein is Cytidylyl-2-hydroxypropylphosphonate hydrolase of Streptomyces fradiae (Streptomyces roseoflavus).